The chain runs to 1040 residues: Multidrug resistance protein MdtB (1040 aa).

Transmembrane regions (helical) follow at residues 25–45 (LLMAAILLAGIIGYRFLPVAA), 347–367 (LMLAIALVVMIIYLFLRNIPA), 369–389 (IIPGVAVPLSLIGTFAVMVFL), 396–416 (LTLMALTIATGFVVDDAIVVI), 440–460 (IGFTIISLTFSLIAVLIPLLF), 472–492 (FAVTLAVAILISAVVSLTLTP), 537–557 (WLTLSVAFATLLLSVMLWIVI), 863–883 (LGSTVWLIVAAVVAMYIVLGV), 888–908 (FIHPITILSTLPTAGVGALLA), 910–930 (IIAGSELDIIAIIGIILLIGI), 968–988 (ILMTTLAALLGALPLMLSTGV), and 998–1018 (IAMVGGLLVSQVLTLFTTPVI).

The protein belongs to the resistance-nodulation-cell division (RND) (TC 2.A.6) family. MdtB subfamily. In terms of assembly, part of a tripartite efflux system composed of MdtA, MdtB and MdtC. MdtB forms a heteromultimer with MdtC.

The protein localises to the cell inner membrane. In Salmonella choleraesuis (strain SC-B67), this protein is Multidrug resistance protein MdtB.